Consider the following 298-residue polypeptide: tRNA dimethylallyltransferase (298 aa).

16-23 (GPTASGKS) provides a ligand contact to ATP. Residue 18–23 (TASGKS) participates in substrate binding. Interaction with substrate tRNA regions lie at residues 41-44 (DSMQ) and 165-169 (QRIVR).

The protein belongs to the IPP transferase family. In terms of assembly, monomer. Mg(2+) serves as cofactor.

The enzyme catalyses adenosine(37) in tRNA + dimethylallyl diphosphate = N(6)-dimethylallyladenosine(37) in tRNA + diphosphate. Its function is as follows. Catalyzes the transfer of a dimethylallyl group onto the adenine at position 37 in tRNAs that read codons beginning with uridine, leading to the formation of N6-(dimethylallyl)adenosine (i(6)A). This is tRNA dimethylallyltransferase from Rhizobium radiobacter (Agrobacterium tumefaciens).